A 390-amino-acid polypeptide reads, in one-letter code: Sulfate adenylyltransferase (390 aa).

The protein belongs to the sulfate adenylyltransferase family.

It catalyses the reaction sulfate + ATP + H(+) = adenosine 5'-phosphosulfate + diphosphate. The protein operates within sulfur metabolism; hydrogen sulfide biosynthesis; sulfite from sulfate: step 1/3. This chain is Sulfate adenylyltransferase (sat), found in Synechocystis sp. (strain ATCC 27184 / PCC 6803 / Kazusa).